The following is a 94-amino-acid chain: Co-chaperonin GroES (94 aa).

The protein belongs to the GroES chaperonin family. In terms of assembly, heptamer of 7 subunits arranged in a ring. Interacts with the chaperonin GroEL.

It localises to the cytoplasm. Its function is as follows. Together with the chaperonin GroEL, plays an essential role in assisting protein folding. The GroEL-GroES system forms a nano-cage that allows encapsulation of the non-native substrate proteins and provides a physical environment optimized to promote and accelerate protein folding. GroES binds to the apical surface of the GroEL ring, thereby capping the opening of the GroEL channel. This Heliobacterium modesticaldum (strain ATCC 51547 / Ice1) protein is Co-chaperonin GroES.